Here is a 466-residue protein sequence, read N- to C-terminus: Ribulose bisphosphate carboxylase large chain (466 aa).

Residue lysine 5 is modified to N6,N6,N6-trimethyllysine. Asparagine 114 and threonine 164 together coordinate substrate. Catalysis depends on lysine 166, which acts as the Proton acceptor. Lysine 168 is a binding site for substrate. Lysine 192, aspartate 194, and glutamate 195 together coordinate Mg(2+). Lysine 192 is subject to N6-carboxylysine. Histidine 285 (proton acceptor) is an active-site residue. Positions 286, 318, and 370 each coordinate substrate.

The protein belongs to the RuBisCO large chain family. Type I subfamily. In terms of assembly, heterohexadecamer of 8 large chains and 8 small chains; disulfide-linked. The disulfide link is formed within the large subunit homodimers. Requires Mg(2+) as cofactor. The disulfide bond which can form in the large chain dimeric partners within the hexadecamer appears to be associated with oxidative stress and protein turnover.

Its subcellular location is the plastid. The protein localises to the chloroplast. It catalyses the reaction 2 (2R)-3-phosphoglycerate + 2 H(+) = D-ribulose 1,5-bisphosphate + CO2 + H2O. It carries out the reaction D-ribulose 1,5-bisphosphate + O2 = 2-phosphoglycolate + (2R)-3-phosphoglycerate + 2 H(+). Its function is as follows. RuBisCO catalyzes two reactions: the carboxylation of D-ribulose 1,5-bisphosphate, the primary event in carbon dioxide fixation, as well as the oxidative fragmentation of the pentose substrate in the photorespiration process. Both reactions occur simultaneously and in competition at the same active site. This chain is Ribulose bisphosphate carboxylase large chain, found in Drosera capensis (Cape sundew).